The following is a 217-amino-acid chain: Killer cell lectin-like receptor subfamily B member 1F (217 aa).

Topologically, residues 1–45 (MDTSRVYGNVKTFRSPGHKQASFPSLSTDACRCPHWHHLALKLGC) are cytoplasmic. The LCK-binding motif motif lies at 31–34 (CRCP). Residues 46-66 (ATLILLLLTLIGLSVFVRFLV) form a helical; Signal-anchor for type II membrane protein membrane-spanning segment. Over 67 to 217 (QKPLIEKCSM…WICQKTLKHV (151 aa)) the chain is Extracellular. A C-type lectin domain is found at 101–211 (HRNKCLIISQ…CSSDNHWICQ (111 aa)). Intrachain disulfides connect Cys122–Cys210 and Cys189–Cys202.

As to expression, expressed in natural killer cells and a subset of T-cells.

It localises to the membrane. Binds CLEC2I/Clr-g leading to activation of natural killer cells or stimulation of IL-2 production and proliferation of T-cells in response to antigen stimulation. May contribute to the formation of the immunological synapse between T-cells and antigen-presenting dendritic cells. The sequence is that of Killer cell lectin-like receptor subfamily B member 1F from Rattus norvegicus (Rat).